Consider the following 309-residue polypeptide: Gamma-hemolysin component A (309 aa).

Positions 1-29 are cleaved as a signal peptide; it reads MIKNKILTATLAVGLIAPLANPFIEISKA.

This sequence belongs to the aerolysin family. As to quaternary structure, toxicity requires sequential binding and synergistic association of a class S and a class F component which form heterooligomeric complexes. HlgA (class S) associates with HlgB (class F) thus forming an AB toxin in strains producing both gamma-hemolysins and leukocidins. HlgA and LukF-PV can also form a complex.

The protein resides in the secreted. Toxin that seems to act by forming pores in the membrane of the cell. Has a hemolytic and a leucotoxic activity. The polypeptide is Gamma-hemolysin component A (hlgA) (Staphylococcus aureus (strain COL)).